The primary structure comprises 406 residues: Acetate kinase (406 aa).

A Mg(2+)-binding site is contributed by Asn-8. Position 15 (Lys-15) interacts with ATP. Arg-92 is a binding site for substrate. Residue Asp-149 is the Proton donor/acceptor of the active site. ATP is bound by residues His-209–Gly-213, Asp-283–Arg-285, and Gly-331–Asn-335. Residue Glu-385 participates in Mg(2+) binding.

The protein belongs to the acetokinase family. As to quaternary structure, homodimer. Mg(2+) is required as a cofactor. Requires Mn(2+) as cofactor.

The protein localises to the cytoplasm. The catalysed reaction is acetate + ATP = acetyl phosphate + ADP. The protein operates within metabolic intermediate biosynthesis; acetyl-CoA biosynthesis; acetyl-CoA from acetate: step 1/2. Its function is as follows. Catalyzes the formation of acetyl phosphate from acetate and ATP. Can also catalyze the reverse reaction. This is Acetate kinase from Corynebacterium aurimucosum (strain ATCC 700975 / DSM 44827 / CIP 107346 / CN-1) (Corynebacterium nigricans).